We begin with the raw amino-acid sequence, 157 residues long: Protein Smg homolog (157 aa).

The protein belongs to the Smg family.

This chain is Protein Smg homolog, found in Xanthomonas oryzae pv. oryzae (strain MAFF 311018).